Reading from the N-terminus, the 314-residue chain is Transmembrane protein 178B (314 aa).

Positions 1–24 (MRLLAGAGLCLALAALALLAVALS) are cleaved as a signal peptide. The disordered stretch occupies residues 32-83 (DARRHRDRCRKPGGKRNDPGYMYTPGQHLPLRGEPPSSRIRSPRGGEPGGVR). Residues 36–45 (HRDRCRKPGG) are compositionally biased toward basic residues. 3 helical membrane-spanning segments follow: residues 194 to 214 (AGFI…GVLG), 228 to 248 (LLFL…VAGI), and 274 to 294 (MFCA…CTLA).

Belongs to the TMEM178 family.

It is found in the membrane. This Xenopus tropicalis (Western clawed frog) protein is Transmembrane protein 178B (tmem178b).